The sequence spans 499 residues: MTPVVALVGRPNVGKSTLFNRLTRTRDALVADFPGLTRDRKYGQAKLGELEFIVVDTGGIDGTEEGIELKMAEQSLLAIEEADVVLFMVDARAGLTAADQAIAEHLRKTHKKVFLVANKTDGIDGDSAVSEFYGLALGEVYQMAAAHGRGVLSLLELALAPHLETLVDAATQETAQDEEEEDFDEEALLRMVAAGELDTKEDTKETPFADLPIKFAIVGRPNVGKSTLTNRMLGEDRVIVYDMPGTTRDSVYIPMERDEQKYVIIDTAGVRRRGKVHETVEKFSVIKTLKAIEDANVCLLVIDAQETITDQDLSILGFVLNTGRSVVLVVNKWDGLDQKVKEDVKNELDRRLGFIDFARVHFISALHGSGVGHLFESIQEAYQSATRRTSTAMLTRIMQMAQEDHQPPMVNGRRVKLKYAHAGGYNPPRIVIHGNQLNDLPDSYKRYLINYFRKSLKIMGTPVRVEFQESANPFEGKKNTLTLSQERQRKRLLKAKAKK.

EngA-type G domains are found at residues 3–166 (PVVA…LETL) and 213–386 (IKFA…QSAT). Residues 9 to 16 (GRPNVGKS), 56 to 60 (DTGGI), 118 to 121 (NKTD), 219 to 226 (GRPNVGKS), 266 to 270 (DTAGV), and 331 to 334 (NKWD) each bind GTP. The KH-like domain occupies 387 to 471 (RRTSTAMLTR…PVRVEFQESA (85 aa)).

The protein belongs to the TRAFAC class TrmE-Era-EngA-EngB-Septin-like GTPase superfamily. EngA (Der) GTPase family. In terms of assembly, associates with the 50S ribosomal subunit.

GTPase that plays an essential role in the late steps of ribosome biogenesis. This is GTPase Der from Aeromonas hydrophila subsp. hydrophila (strain ATCC 7966 / DSM 30187 / BCRC 13018 / CCUG 14551 / JCM 1027 / KCTC 2358 / NCIMB 9240 / NCTC 8049).